We begin with the raw amino-acid sequence, 399 residues long: Chorismate synthase (399 aa).

R40 and R46 together coordinate NADP(+). Residues 135–137 (RAS), 256–257 (QA), G301, 316–320 (KPIAT), and R342 contribute to the FMN site.

This sequence belongs to the chorismate synthase family. As to quaternary structure, homotetramer. The cofactor is FMNH2.

It carries out the reaction 5-O-(1-carboxyvinyl)-3-phosphoshikimate = chorismate + phosphate. The protein operates within metabolic intermediate biosynthesis; chorismate biosynthesis; chorismate from D-erythrose 4-phosphate and phosphoenolpyruvate: step 7/7. Catalyzes the anti-1,4-elimination of the C-3 phosphate and the C-6 proR hydrogen from 5-enolpyruvylshikimate-3-phosphate (EPSP) to yield chorismate, which is the branch point compound that serves as the starting substrate for the three terminal pathways of aromatic amino acid biosynthesis. This reaction introduces a second double bond into the aromatic ring system. In Paenarthrobacter aurescens (strain TC1), this protein is Chorismate synthase.